The primary structure comprises 255 residues: Hydroxyacylglutathione hydrolase (255 aa).

7 residues coordinate Zn(2+): His-56, His-58, Asp-60, His-61, His-114, Asp-133, and His-171.

The protein belongs to the metallo-beta-lactamase superfamily. Glyoxalase II family. As to quaternary structure, monomer. Requires Zn(2+) as cofactor.

The catalysed reaction is an S-(2-hydroxyacyl)glutathione + H2O = a 2-hydroxy carboxylate + glutathione + H(+). It functions in the pathway secondary metabolite metabolism; methylglyoxal degradation; (R)-lactate from methylglyoxal: step 2/2. In terms of biological role, thiolesterase that catalyzes the hydrolysis of S-D-lactoyl-glutathione to form glutathione and D-lactic acid. This chain is Hydroxyacylglutathione hydrolase, found in Bradyrhizobium sp. (strain ORS 278).